The sequence spans 315 residues: Olfactory receptor 4A5 (315 aa).

Residues 1–23 (MRQNNNITEFVLLGFSQDPGVQK) are Extracellular-facing. Asn-6 carries N-linked (GlcNAc...) asparagine glycosylation. The chain crosses the membrane as a helical span at residues 24–47 (ALFVMFLLTYLVTVVGNLLIVVDI). Topologically, residues 48–55 (IASPSLGS) are cytoplasmic. The chain crosses the membrane as a helical span at residues 56–77 (PMYFFLACLSFIDAAYSTTISP). Residues 78-98 (KLIVGLFCDKKTISFQGCMGQ) are Extracellular-facing. A disulfide bond links Cys-95 and Cys-186. The chain crosses the membrane as a helical span at residues 99 to 118 (LFIDHFFGGAEVFLLVVMAC). Residues 119-137 (DRYVAICKPLHYLTIMNRQ) lie on the Cytoplasmic side of the membrane. The chain crosses the membrane as a helical span at residues 138-156 (VCFLLLVVAMIGGFVHSAF). Topologically, residues 157–192 (QIVVYSLPFCGPNVIVHFSCDMHPLLELACTDTYFI) are extracellular. The chain crosses the membrane as a helical span at residues 193-216 (GLTVVVNSGAICMVIFNLLLISYG). Residues 217 to 232 (VILSSLKTYSQEKRGK) are Cytoplasmic-facing. A helical transmembrane segment spans residues 233–255 (ALSTCSSGSTVVVLFFVPCIFIY). Residues 256–266 (VRPVSNFPTDK) are Extracellular-facing. The helical transmembrane segment at 267-286 (FMTVFYTIITHMLSPLIYTL) threads the bilayer. Topologically, residues 287–315 (RNSEMRNAIEKLLGKKLTIFIIGGVSVLM) are cytoplasmic.

The protein belongs to the G-protein coupled receptor 1 family.

The protein resides in the cell membrane. Its function is as follows. Odorant receptor. The chain is Olfactory receptor 4A5 (OR4A5) from Homo sapiens (Human).